The primary structure comprises 259 residues: Carbonic anhydrase 1 (259 aa).

N-acetylalanine is present on Ala-1. Residues 2–258 form the Alpha-carbonic anhydrase domain; that stretch reads HAWGYGPTDG…LKGRHVRASF (257 aa). The active-site Proton donor/acceptor is His-63. 3 residues coordinate Zn(2+): His-93, His-95, and His-118. Substrate contacts are provided by residues Thr-197 and 197–198; that span reads TT.

Belongs to the alpha-carbonic anhydrase family. Requires Zn(2+) as cofactor.

Its subcellular location is the cytoplasm. The catalysed reaction is hydrogencarbonate + H(+) = CO2 + H2O. Catalyzes the reversible hydration of carbon dioxide. The chain is Carbonic anhydrase 1 (ca1) from Chionodraco hamatus (Antarctic teleost icefish).